A 212-amino-acid chain; its full sequence is Proteasome subunit beta 2 (212 aa).

A propeptide spans 1 to 15 (removed in mature form; by autocatalysis); that stretch reads MLHHPGTGQLRALKG. Residue Thr16 is the Nucleophile of the active site.

This sequence belongs to the peptidase T1B family. In terms of assembly, the 20S proteasome core is composed of 14 alpha and 14 beta subunits that assemble into four stacked heptameric rings, resulting in a barrel-shaped structure. The two inner rings, each composed of seven catalytic beta subunits, are sandwiched by two outer rings, each composed of seven alpha subunits. The catalytic chamber with the active sites is on the inside of the barrel. Has a gated structure, the ends of the cylinder being occluded by the N-termini of the alpha-subunits. Is capped at one or both ends by the proteasome regulatory ATPase, PAN.

The protein localises to the cytoplasm. It catalyses the reaction Cleavage of peptide bonds with very broad specificity.. The formation of the proteasomal ATPase PAN-20S proteasome complex, via the docking of the C-termini of PAN into the intersubunit pockets in the alpha-rings, triggers opening of the gate for substrate entry. Interconversion between the open-gate and close-gate conformations leads to a dynamic regulation of the 20S proteasome proteolysis activity. Component of the proteasome core, a large protease complex with broad specificity involved in protein degradation. The sequence is that of Proteasome subunit beta 2 from Hyperthermus butylicus (strain DSM 5456 / JCM 9403 / PLM1-5).